The sequence spans 298 residues: Probable deoxyhypusine synthase 2 (298 aa).

The Nucleophile role is filled by Lys259.

The protein belongs to the deoxyhypusine synthase family. NAD(+) is required as a cofactor.

It catalyses the reaction [eIF5A protein]-L-lysine + spermidine = [eIF5A protein]-deoxyhypusine + propane-1,3-diamine. Its pathway is protein modification; eIF5A hypusination. Functionally, catalyzes the NAD-dependent oxidative cleavage of spermidine and the subsequent transfer of the butylamine moiety of spermidine to the epsilon-amino group of a specific lysine residue of the eIF-5A precursor protein to form the intermediate deoxyhypusine residue. The protein is Probable deoxyhypusine synthase 2 (dys2) of Archaeoglobus fulgidus (strain ATCC 49558 / DSM 4304 / JCM 9628 / NBRC 100126 / VC-16).